A 249-amino-acid chain; its full sequence is Putative protein SNX29P2 (249 aa).

2 disordered regions span residues 109–171 (QVTN…SNSW) and 188–249 (DVKS…PGFK). A compositionally biased stretch (low complexity) spans 156-170 (SPFGPNSNGSQSSNS). Positions 193 to 204 (DDEDVDENEDDV) are enriched in acidic residues. Over residues 226–242 (HSVTQAGVQWHDLSSLQ) the composition is skewed to polar residues.

This sequence belongs to the sorting nexin family.

This Homo sapiens (Human) protein is Putative protein SNX29P2 (SNX29P2).